Here is a 131-residue protein sequence, read N- to C-terminus: MRHYEIVFMVHPDQSEQVPGMIERYTGAITAAAGTIHRLEDWGRRQLAYPINKLHKAHYVLMNVEAPQEAIDELETNFRFNDAVIRSMVMRTKHAVTEASPMVKAKDERRERREDFANETADDSEAGDSEE.

Positions 98-131 (EASPMVKAKDERRERREDFANETADDSEAGDSEE) are disordered. Basic and acidic residues predominate over residues 104–116 (KAKDERRERREDF). Positions 120–131 (TADDSEAGDSEE) are enriched in acidic residues.

The protein belongs to the bacterial ribosomal protein bS6 family.

Binds together with bS18 to 16S ribosomal RNA. This Klebsiella pneumoniae subsp. pneumoniae (strain ATCC 700721 / MGH 78578) protein is Small ribosomal subunit protein bS6.